A 395-amino-acid polypeptide reads, in one-letter code: MRRRQDQAPPRAGEQVRVDLGRANLLAAHQLRQRQQRAQYGLTLRGGVEVHHADQQLQERADGAEPVDQHGPPCLVGIRVQRRGQLEQRGDRRGQLVPGHHLLDGRPHPFQALHFRRRDLPGVGVDLLARGVEHDLERGRQLRRRPLHARQRLQLLLRALALRPGQQLRRDQHLQQVQRVVHRPRREVHGGGQQRRQAASVGVPAQQRRLAVHPVPGQLRQPARRYPRHINGAHSERGDLLRPLQRPLHLRTRHPHRPAPQPVQLRDPLPGRHRPAKESSTARCPVLSIPCRLSHSRWFAASRTEATSLVSVVTPGSSTRRSLSHPAAASNNAFGPSPVVQARASTHSRSSPSASANSRYSKTRRSSRTCSSRVFSRSPYSFSTDGSPMSSCSAR.

Disordered stretches follow at residues 185 to 282 (RREV…SSTA) and 316 to 372 (GSST…TCSS). Basic residues predominate over residues 248-257 (LHLRTRHPHR). Residues 342 to 360 (ARASTHSRSSPSASANSRY) show a composition bias toward low complexity.

This is an uncharacterized protein from Streptomyces fradiae (Streptomyces roseoflavus).